Reading from the N-terminus, the 67-residue chain is uncharacterized protein (67 aa).

Residues 1–28 (MSHVSVIAARLLVWVGILLCLGVPQLWA) form the signal peptide. N-linked (GlcNAc...) asparagine; by host glycosylation occurs at asparagine 39.

This is an uncharacterized protein from Invertebrate iridescent virus 3 (IIV-3).